Consider the following 106-residue polypeptide: Large ribosomal subunit protein bL21 (106 aa).

Belongs to the bacterial ribosomal protein bL21 family. As to quaternary structure, part of the 50S ribosomal subunit. Contacts protein L20.

Functionally, this protein binds to 23S rRNA in the presence of protein L20. The protein is Large ribosomal subunit protein bL21 of Chlamydia pneumoniae (Chlamydophila pneumoniae).